A 114-amino-acid polypeptide reads, in one-letter code: Probable prefoldin subunit 2 (114 aa).

The protein belongs to the prefoldin subunit beta family. In terms of assembly, heterohexamer of two PFD-alpha type and four PFD-beta type subunits.

Its function is as follows. Binds specifically to cytosolic chaperonin (c-CPN) and transfers target proteins to it. Binds to nascent polypeptide chain and promotes folding in an environment in which there are many competing pathways for nonnative proteins. The polypeptide is Probable prefoldin subunit 2 (Schizosaccharomyces pombe (strain 972 / ATCC 24843) (Fission yeast)).